A 160-amino-acid chain; its full sequence is Growth arrest and DNA damage-inducible protein GADD45 beta (160 aa).

It belongs to the GADD45 family. Interacts with GADD45GIP1.

Its function is as follows. Involved in the regulation of growth and apoptosis. Mediates activation of stress-responsive MTK1/MEKK4 MAPKKK. This chain is Growth arrest and DNA damage-inducible protein GADD45 beta (GADD45B), found in Bos taurus (Bovine).